The sequence spans 521 residues: Fucosyltransferase 3 (521 aa).

Residues 1–12 (MKRGKKNSDAGD) are compositionally biased toward basic and acidic residues. Residues 1 to 29 (MKRGKKNSDAGDRLTNSDTRTGSSELNAM) are disordered. The Cytoplasmic portion of the chain corresponds to 1–39 (MKRGKKNSDAGDRLTNSDTRTGSSELNAMMKPSLSSMKT). Polar residues predominate over residues 14–26 (LTNSDTRTGSSEL). The helical; Signal-anchor for type II membrane protein transmembrane segment at 40-60 (MGLLLAVLMVASVMFSLSVVL) threads the bilayer. Topologically, residues 61–521 (RDPPSDDVIE…QATLFHGCKD (461 aa)) are lumenal. Residues N152, N222, and N493 are each glycosylated (N-linked (GlcNAc...) asparagine).

This sequence belongs to the glycosyltransferase 37 family. As to expression, expressed in roots, stems, leaves, flowers, siliques and seedlings.

It localises to the golgi apparatus. The protein resides in the golgi stack membrane. The protein operates within protein modification; protein glycosylation. In terms of biological role, may be involved in cell wall biosynthesis. May act as a fucosyltransferase. The sequence is that of Fucosyltransferase 3 (FUT3) from Arabidopsis thaliana (Mouse-ear cress).